We begin with the raw amino-acid sequence, 205 residues long: Peptidyl-tRNA hydrolase (205 aa).

Y18 contacts tRNA. H23 functions as the Proton acceptor in the catalytic mechanism. Y69, N71, and N117 together coordinate tRNA.

This sequence belongs to the PTH family. As to quaternary structure, monomer.

Its subcellular location is the cytoplasm. It carries out the reaction an N-acyl-L-alpha-aminoacyl-tRNA + H2O = an N-acyl-L-amino acid + a tRNA + H(+). Its function is as follows. Hydrolyzes ribosome-free peptidyl-tRNAs (with 1 or more amino acids incorporated), which drop off the ribosome during protein synthesis, or as a result of ribosome stalling. Functionally, catalyzes the release of premature peptidyl moieties from peptidyl-tRNA molecules trapped in stalled 50S ribosomal subunits, and thus maintains levels of free tRNAs and 50S ribosomes. This is Peptidyl-tRNA hydrolase from Thermosynechococcus vestitus (strain NIES-2133 / IAM M-273 / BP-1).